We begin with the raw amino-acid sequence, 101 residues long: Small ribosomal subunit protein bS18c (101 aa).

The protein belongs to the bacterial ribosomal protein bS18 family. As to quaternary structure, part of the 30S ribosomal subunit.

It is found in the plastid. Its subcellular location is the chloroplast. The polypeptide is Small ribosomal subunit protein bS18c (Gossypium barbadense (Sea Island cotton)).